The primary structure comprises 161 residues: Transcriptional repressor NrdR (161 aa).

The interval Met1 to Asn23 is disordered. A zinc finger spans residues Cys3 to Cys34. Residues Thr11–Asn23 are compositionally biased toward basic and acidic residues. Residues Leu49–Asp139 enclose the ATP-cone domain.

The protein belongs to the NrdR family. Requires Zn(2+) as cofactor.

Its function is as follows. Negatively regulates transcription of bacterial ribonucleotide reductase nrd genes and operons by binding to NrdR-boxes. This chain is Transcriptional repressor NrdR, found in Maricaulis maris (strain MCS10) (Caulobacter maris).